Reading from the N-terminus, the 89-residue chain is UPF0147 protein YN1551_1489 (89 aa).

It belongs to the UPF0147 family.

The polypeptide is UPF0147 protein YN1551_1489 (Saccharolobus islandicus (strain Y.N.15.51 / Yellowstone #2) (Sulfolobus islandicus)).